We begin with the raw amino-acid sequence, 276 residues long: Large ribosomal subunit protein uL2 (276 aa).

Disordered stretches follow at residues 1 to 61 (MALK…HKQK) and 224 to 276 (AMNP…KKKN). Over residues 15-31 (GRIDLRKDEITAQKPEK) the composition is skewed to basic and acidic residues.

This sequence belongs to the universal ribosomal protein uL2 family. Part of the 50S ribosomal subunit. Forms a bridge to the 30S subunit in the 70S ribosome.

One of the primary rRNA binding proteins. Required for association of the 30S and 50S subunits to form the 70S ribosome, for tRNA binding and peptide bond formation. It has been suggested to have peptidyltransferase activity; this is somewhat controversial. Makes several contacts with the 16S rRNA in the 70S ribosome. The chain is Large ribosomal subunit protein uL2 from Treponema denticola (strain ATCC 35405 / DSM 14222 / CIP 103919 / JCM 8153 / KCTC 15104).